A 361-amino-acid polypeptide reads, in one-letter code: Riboflavin biosynthesis protein RibD (361 aa).

The CMP/dCMP-type deaminase domain occupies 1–122 (MEEYYMKLAL…MMKEAGIEVR (122 aa)). Positions 1 to 144 (MEEYYMKLAL…EKFLHFMRTG (144 aa)) are deaminase. Histidine 49 lines the Zn(2+) pocket. The Proton donor role is filled by glutamate 51. Residues cysteine 74 and cysteine 83 each coordinate Zn(2+). Positions 145–361 (LPYVTLKAAA…IKLTAKPTKE (217 aa)) are reductase. NADP(+) is bound at residue alanine 153. Serine 167 contributes to the substrate binding site. An NADP(+)-binding site is contributed by tryptophan 169. Residue arginine 183 coordinates substrate. NADP(+) is bound by residues threonine 195 and aspartate 199. Substrate-binding residues include leucine 203 and arginine 206. Threonine 221 contributes to the NADP(+) binding site. Glutamate 290 contacts substrate. Position 292 to 298 (292 to 298 (GSAVHGS)) interacts with NADP(+).

The protein in the N-terminal section; belongs to the cytidine and deoxycytidylate deaminase family. In the C-terminal section; belongs to the HTP reductase family. In terms of assembly, homotetramer. The cofactor is Zn(2+).

It carries out the reaction 2,5-diamino-6-hydroxy-4-(5-phosphoribosylamino)-pyrimidine + H2O + H(+) = 5-amino-6-(5-phospho-D-ribosylamino)uracil + NH4(+). The enzyme catalyses 5-amino-6-(5-phospho-D-ribitylamino)uracil + NADP(+) = 5-amino-6-(5-phospho-D-ribosylamino)uracil + NADPH + H(+). Its pathway is cofactor biosynthesis; riboflavin biosynthesis; 5-amino-6-(D-ribitylamino)uracil from GTP: step 2/4. The protein operates within cofactor biosynthesis; riboflavin biosynthesis; 5-amino-6-(D-ribitylamino)uracil from GTP: step 3/4. Its function is as follows. Converts 2,5-diamino-6-(ribosylamino)-4(3h)-pyrimidinone 5'-phosphate into 5-amino-6-(ribosylamino)-2,4(1h,3h)-pyrimidinedione 5'-phosphate. This chain is Riboflavin biosynthesis protein RibD (ribD), found in Bacillus subtilis (strain 168).